A 133-amino-acid polypeptide reads, in one-letter code: MTSSFALVLLLGGVAVCVATGVFGGYSERANHQANPEFLNLAHYATSTWSAQQPGKTHFDTVAEVLKVETQVVAGTNYRLTLKVAESTCELTSTYNKDTCLPKADAAHRTCTTVVFESLQGDKSVSSFECEAA.

The N-terminal stretch at 1–19 is a signal peptide; it reads MTSSFALVLLLGGVAVCVA. Positions 30 to 117 constitute a Cystatin domain; sequence ANHQANPEFL…HRTCTTVVFE (88 aa). 2 disulfide bridges follow: Cys-89–Cys-100 and Cys-111–Cys-130.

The protein belongs to the cystatin family. In terms of assembly, monomer. Can form homodimers in vitro, but probably not in vivo. Homodimers are predicted to be inactive; dimerization disrupts the interaction with target proteases.

Its subcellular location is the secreted. In terms of biological role, inhibitor of cysteine proteinases. Inhibits host immune responses via its inhibition of host cathepsins. Contributes to the suppression of the host's immune response to tick salivary proteins and is important for successful feeding on hosts. Inhibits differentiation of host dendritic cells. Inhibits proliferation of host T-cells in response to antigen stimulus. Down-regulates TLR2-mediated host responses to infection by B.burgdorferi and the production of the chemokine CCL3 by host dendritic cells. Down-regulates host responses to infection by B.burgdorferi and the production of IFNB1 by host dendritic cells. Down-regulates IL1B production by host mast cells, and this then leads to impaired activation of IL1R1, resulting in decreased IL9 production. Inhibits host inflammatory reactions and recruitment of host neutrophils. Inhibits papain and cathepsin L (CTSL) (in vitro). Inhibits cathepsin S (CTSS) (in vitro). Inhibits CTSV and CTSC, but to a lesser degree (in vitro). The polypeptide is Salivary cystatin-L (Ixodes scapularis (Black-legged tick)).